The chain runs to 398 residues: DNA-directed RNA polymerase III subunit RPC4 (398 aa).

Residues 1-114 are disordered; it reads MSEGNAAGEP…SHSIFEQGPA (114 aa). The residue at position 2 (Ser2) is an N-acetylserine. Ser42 is subject to Phosphoserine. The span at 66 to 100 shows a compositional bias: basic and acidic residues; it reads KIKEEPKEEVTVKKEKRERDRDRQREGHGRGRGRP. Residues Lys68 and Lys78 each participate in a glycyl lysine isopeptide (Lys-Gly) (interchain with G-Cter in SUMO2) cross-link. Residues Arg95, Arg97, and Arg99 each carry the omega-N-methylarginine modification. Glycyl lysine isopeptide (Lys-Gly) (interchain with G-Cter in SUMO2) cross-links involve residues Lys141, Lys152, Lys160, Lys190, Lys199, Lys206, Lys220, Lys285, Lys302, Lys310, and Lys396. Positions 220-244 are disordered; that stretch reads KEEPRDEEEEAKMKAPPKAARKTPG.

This sequence belongs to the eukaryotic RPC4/POLR3D RNA polymerase subunit family. In terms of assembly, component of the RNA polymerase III complex consisting of 17 subunits: a ten-subunit horseshoe-shaped catalytic core composed of POLR3A/RPC1, POLR3B/RPC2, POLR1C/RPAC1, POLR1D/RPAC2, POLR3K/RPC10, POLR2E/RPABC1, POLR2F/RPABC2, POLR2H/RPABC3, POLR2K/RPABC4 and POLR2L/RPABC5; a mobile stalk composed of two subunits POLR3H/RPC8 and CRCP/RPC9, protruding from the core and functioning primarily in transcription initiation; and additional subunits homologous to general transcription factors of the RNA polymerase II machinery, POLR3C/RPC3-POLR3F/RPC6-POLR3G/RPC7 heterotrimer required for transcription initiation and POLR3D/RPC4-POLR3E/RPC5 heterodimer involved in both transcription initiation and termination. Sumoylation on Lys-141 can serve as a signal to mark misfolded Pol III for proteasomal degradation.

The protein resides in the nucleus. Its function is as follows. DNA-dependent RNA polymerase catalyzes the transcription of DNA into RNA using the four ribonucleoside triphosphates as substrates. Specific peripheric component of RNA polymerase III (Pol III) which synthesizes small non-coding RNAs including 5S rRNA, snRNAs, tRNAs and miRNAs from at least 500 distinct genomic loci. Assembles with POLR3E/RPC5 forming a subcomplex that binds the Pol III core. Enables recruitment of Pol III at transcription initiation site and drives transcription initiation from both type 2 and type 3 DNA promoters. Required for efficient transcription termination and reinitiation. Pol III plays a key role in sensing and limiting infection by intracellular bacteria and DNA viruses. Acts as nuclear and cytosolic DNA sensor involved in innate immune response. Can sense non-self dsDNA that serves as template for transcription into dsRNA. The non-self RNA polymerase III transcripts, such as Epstein-Barr virus-encoded RNAs (EBERs) induce type I interferon and NF-kappa-B through the RIG-I pathway. In Homo sapiens (Human), this protein is DNA-directed RNA polymerase III subunit RPC4.